The primary structure comprises 1282 residues: Cytokine receptor (1282 aa).

The signal sequence occupies residues 1–23; it reads MVAQEQLVLLLMLLAGCRGGANA. Topologically, residues 24–889 are extracellular; the sequence is ILDPGWVIPS…CTPDTHSVKA (866 aa). 4 N-linked (GlcNAc...) asparagine glycosylation sites follow: Asn-44, Asn-86, Asn-87, and Asn-114. Cysteines 47 and 106 form a disulfide. Fibronectin type-III domains lie at 124 to 220, 227 to 327, 329 to 431, 436 to 535, 537 to 631, 635 to 735, and 736 to 836; these read PLLV…NHFE, PGQN…TAPA, PRRP…SNRD, EPRN…KKDD, AKME…TGEA, QPRE…TAIG, and VPSP…LMST. Cys-132 and Cys-142 form a disulfide bridge. N-linked (GlcNAc...) asparagine glycans are attached at residues Asn-143 and Asn-156. Cys-173 and Cys-183 are oxidised to a cystine. Asn-184, Asn-230, Asn-235, Asn-278, Asn-298, Asn-310, Asn-376, Asn-448, and Asn-466 each carry an N-linked (GlcNAc...) asparagine glycan. An intrachain disulfide couples Cys-472 to Cys-482. Asn-568, Asn-581, Asn-626, Asn-676, Asn-703, Asn-777, Asn-790, and Asn-862 each carry an N-linked (GlcNAc...) asparagine glycan. A helical membrane pass occupies residues 890-910; sequence MYQTIEVTVAILVLGVIFYLV. Residues 911 to 1282 lie on the Cytoplasmic side of the membrane; it reads YKKYRKMSDI…NAMAHNRHVL (372 aa). At Ser-976 the chain carries Phosphoserine. Disordered regions lie at residues 989–1092 and 1238–1258; these read TASS…HTFS and TVGSPTHAAGGAPGGGNQHSR. 2 stretches are compositionally biased toward basic and acidic residues: residues 999 to 1009 and 1033 to 1064; these read VDRDGYDDNHE and NDRERERERDREQEREREQQQQQRESEMDREQ.

It belongs to the type I cytokine receptor family. In terms of assembly, interacts with wdp; the interaction promotes internalization of dome and its subsequent lysosomal degradation; thereby reducing JAK/STAT signaling. Undergoes lysosomal degradation. As to expression, in stage 11 embryos, tracheal pits show highest expression, at stage 14 high expression is detected in the posterior spiracles, gut and head.

The protein resides in the apicolateral cell membrane. In terms of biological role, critical for epithelial morphogenesis during oogenesis; border cell migration. Required in the germarium for the polarization of follicle cells during encapsulation of germline cells. Required for embryonic segmentation and trachea specification. Essential receptor molecule for upd and JAK/STAT signaling during oogenesis. In Drosophila melanogaster (Fruit fly), this protein is Cytokine receptor (dome).